The sequence spans 601 residues: N-acetyltransferase ESCO2 (601 aa).

Ser-29, Ser-75, Ser-223, and Ser-244 each carry phosphoserine. Positions 222 to 243 (SSLENEPSLGRTQKSKSEVIED) are disordered. A compositionally biased stretch (basic and acidic residues) spans 282 to 305 (KEKLIKDSSDDRVSSKEHKVDKNE). Residues 282-315 (KEKLIKDSSDDRVSSKEHKVDKNEAFSSEDSLGE) are disordered. Positions 306–315 (AFSSEDSLGE) are enriched in polar residues. Ser-312 carries the phosphoserine modification. The CCHH-type zinc-finger motif lies at 387-411 (TVCKSCGMIYTASNPEDEMQHVQHH). Ser-512 carries the phosphoserine modification.

The protein belongs to the acetyltransferase family. ECO subfamily. Widely expressed in fetal tissues. In adult, it is expressed in thymus, placenta and small intestine.

The protein resides in the nucleus. It is found in the chromosome. The catalysed reaction is L-lysyl-[protein] + acetyl-CoA = N(6)-acetyl-L-lysyl-[protein] + CoA + H(+). Functionally, acetyltransferase required for the establishment of sister chromatid cohesion. Couples the processes of cohesion and DNA replication to ensure that only sister chromatids become paired together. In contrast to the structural cohesins, the deposition and establishment factors are required only during the S phase. Acetylates the cohesin component SMC3. The chain is N-acetyltransferase ESCO2 from Homo sapiens (Human).